The chain runs to 88 residues: Large ribosomal subunit protein uL29 (88 aa).

The protein belongs to the universal ribosomal protein uL29 family.

In Sulfurisphaera tokodaii (strain DSM 16993 / JCM 10545 / NBRC 100140 / 7) (Sulfolobus tokodaii), this protein is Large ribosomal subunit protein uL29 (rpl29).